The primary structure comprises 320 residues: Ferrochelatase (320 aa).

Residues H194 and E275 each contribute to the Fe cation site.

The protein belongs to the ferrochelatase family. Monomer.

It localises to the cytoplasm. The catalysed reaction is heme b + 2 H(+) = protoporphyrin IX + Fe(2+). It functions in the pathway porphyrin-containing compound metabolism; protoheme biosynthesis; protoheme from protoporphyrin-IX: step 1/1. Its function is as follows. Catalyzes the ferrous insertion into protoporphyrin IX. The protein is Ferrochelatase of Escherichia coli (strain SMS-3-5 / SECEC).